The following is a 155-amino-acid chain: Ribonuclease H (155 aa).

Residues methionine 1 to glycine 142 form the RNase H type-1 domain. The Mg(2+) site is built by aspartate 10, glutamate 48, aspartate 70, and aspartate 134.

This sequence belongs to the RNase H family. Monomer. Requires Mg(2+) as cofactor.

It is found in the cytoplasm. The enzyme catalyses Endonucleolytic cleavage to 5'-phosphomonoester.. In terms of biological role, endonuclease that specifically degrades the RNA of RNA-DNA hybrids. This is Ribonuclease H from Erwinia tasmaniensis (strain DSM 17950 / CFBP 7177 / CIP 109463 / NCPPB 4357 / Et1/99).